The sequence spans 242 residues: Caspase-14 (242 aa).

A propeptide spanning residues 1–5 is cleaved from the precursor; the sequence is MSNPR. Active-site residues include His-89 and Cys-132. A propeptide spanning residues 147–152 is cleaved from the precursor; it reads EIVMVI.

The protein belongs to the peptidase C14A family. Heterodimer of a large and a small subunit, both processed from the precursor; the mature active form is a p17/p10 dimer and the intermediate form a p20/p8 dimer. Maturation by proteolytic processing appears to be a two-step process. The precursor is processed by KLK7 to yield the p20/p8 intermediate form which acts on the precursor to yield the p17/p10 mature form. Initially, cleavage between Ile-152 and Lys-153 has been proposed to yield the large and small subunits of the active enzyme. As to expression, expressed in keratinocytes of adult skin suprabasal layers (from spinous layers to the stratum granulosum and stratum corneum) (at protein level). Expressed in keratinocytes of hair shaft and sebaceous glands (at protein level). In psoriatic skin only expressed at very low levels. The p17/10 mature form is expressed in epidermis stratum corneum, the p20/p8 intermediate form in epidermis upper granular cells of the stratum granulosum.

It localises to the cytoplasm. It is found in the nucleus. Its activity is regulated as follows. Inhibited by caspase-1 inhibitor YVAD-FMK and the pan-caspase inhibitor VAD-FMK. Functionally, non-apoptotic caspase involved in epidermal differentiation. Is the predominant caspase in epidermal stratum corneum. Seems to play a role in keratinocyte differentiation and is required for cornification. Regulates maturation of the epidermis by proteolytically processing filaggrin. In vitro has a preference for the substrate [WY]-X-X-D motif and is active on the synthetic caspase substrate WEHD-ACF. Involved in processing of prosaposin in the epidermis. May be involved in retinal pigment epithelium cell barrier function. Involved in DNA degradation in differentiated keratinocytes probably by cleaving DFFA/ICAD leading to liberation of DFFB/CAD. This chain is Caspase-14 (CASP14), found in Homo sapiens (Human).